Consider the following 313-residue polypeptide: Probable cell division protein WhiA (313 aa).

Residues 277-311 (SLKEVAAQVPDGPISKSGVNHRFQKIREIAKQLKE) constitute a DNA-binding region (H-T-H motif).

The protein belongs to the WhiA family.

Its function is as follows. Involved in cell division and chromosome segregation. This Lactobacillus johnsonii (strain CNCM I-12250 / La1 / NCC 533) protein is Probable cell division protein WhiA.